Reading from the N-terminus, the 273-residue chain is GTP cyclohydrolase MptA (273 aa).

Belongs to the GTP cyclohydrolase IV family. Homodimer. It depends on Fe(2+) as a cofactor.

The catalysed reaction is GTP + H2O = 7,8-dihydroneopterin 2',3'-cyclic phosphate + formate + diphosphate + H(+). It participates in cofactor biosynthesis; 5,6,7,8-tetrahydromethanopterin biosynthesis. Converts GTP to 7,8-dihydro-D-neopterin 2',3'-cyclic phosphate, the first intermediate in the biosynthesis of coenzyme methanopterin. This chain is GTP cyclohydrolase MptA, found in Picrophilus torridus (strain ATCC 700027 / DSM 9790 / JCM 10055 / NBRC 100828 / KAW 2/3).